We begin with the raw amino-acid sequence, 198 residues long: MAYNKKYADWKRKIWFTIKAPAIFNEVELGETPAYKPEQVIGRRVELNMALVTNNYQLQNYKGIFKITKVEGTTAKTELEGIKMYESIIQKWVEPGRDKITDSFVIKDKDNRLVRVKPVLITNRRLHRKQGTAIRNIWRNYFVELGKKLSFEDMVMKILNKEIPEQLKIQIKKIYPPLFFAIRQFYLEPREKHILLIE.

It belongs to the eukaryotic ribosomal protein eS1 family.

This Nanoarchaeum equitans (strain Kin4-M) protein is Small ribosomal subunit protein eS1.